A 125-amino-acid polypeptide reads, in one-letter code: Large ribosomal subunit protein bL12 (125 aa).

This sequence belongs to the bacterial ribosomal protein bL12 family. Homodimer. Part of the ribosomal stalk of the 50S ribosomal subunit. Forms a multimeric L10(L12)X complex, where L10 forms an elongated spine to which 2 to 4 L12 dimers bind in a sequential fashion. Binds GTP-bound translation factors.

Functionally, forms part of the ribosomal stalk which helps the ribosome interact with GTP-bound translation factors. Is thus essential for accurate translation. The polypeptide is Large ribosomal subunit protein bL12 (Campylobacter lari (strain RM2100 / D67 / ATCC BAA-1060)).